A 451-amino-acid polypeptide reads, in one-letter code: MSKQYFGTDGIRGRANRFPMTAEVAMRVGMAAGLSFQNGSHRHRVVLGKDTRLSGYMIENAMVAGFCAAGMDVFLLGPIPTPAVAMLVRSLRADIGVMISASHNPYHDNGIKLFGPDGYKLSDEIENRIEAMLDRDVELALADSESLGRAKRVDGVHDRYIEFAKRTLPRDMSLSGLRVVIDCANGAAYKVAPAALWELGAEVVPIYVDPNGFNVNEECGSTHPMSLAKKVHEVRADIGIALDGDADRVVIVDENGTIIDGDQIMALIAESWHENEKLIGGGIVATVMSNLGLERFLRGRGLELHRTKVGDRYVVEHMREHGLNIGGEQSGHVVLSDFSTSGDGLVTALQVLAHIKRLNKPASEVCRKFEPVPQVLKNVRISGGKPLEAASVKAAIADAQAQLGDTGRLVIRPSGTEPLIRVMAEGDDPELVRKMVDSIVDAIADARTAAA.

The active-site Phosphoserine intermediate is Ser102. Ser102, Asp243, Asp245, and Asp247 together coordinate Mg(2+). The residue at position 102 (Ser102) is a Phosphoserine.

It belongs to the phosphohexose mutase family. It depends on Mg(2+) as a cofactor. In terms of processing, activated by phosphorylation.

The enzyme catalyses alpha-D-glucosamine 1-phosphate = D-glucosamine 6-phosphate. In terms of biological role, catalyzes the conversion of glucosamine-6-phosphate to glucosamine-1-phosphate. The polypeptide is Phosphoglucosamine mutase (Chelativorans sp. (strain BNC1)).